The sequence spans 292 residues: Probable 2-(5''-triphosphoribosyl)-3'-dephosphocoenzyme-A synthase (292 aa).

Belongs to the CitG/MdcB family.

It carries out the reaction 3'-dephospho-CoA + ATP = 2'-(5''-triphospho-alpha-D-ribosyl)-3'-dephospho-CoA + adenine. The polypeptide is Probable 2-(5''-triphosphoribosyl)-3'-dephosphocoenzyme-A synthase (Shigella flexneri serotype 5b (strain 8401)).